A 527-amino-acid chain; its full sequence is Serine/threonine-protein kinase CHK1 (527 aa).

Residues 15-281 (VVLGDTVGQG…LKALKLHPWV (267 aa)) enclose the Protein kinase domain. Residues 21–29 (VGQGAFACV) and lysine 45 each bind ATP. Aspartate 142 (proton acceptor) is an active-site residue.

Belongs to the protein kinase superfamily. CAMK Ser/Thr protein kinase family. NIM1 subfamily.

The protein localises to the nucleus. The enzyme catalyses L-seryl-[protein] + ATP = O-phospho-L-seryl-[protein] + ADP + H(+). The catalysed reaction is L-threonyl-[protein] + ATP = O-phospho-L-threonyl-[protein] + ADP + H(+). In terms of biological role, serine/threonine-protein kinase which is required for checkpoint-mediated cell cycle arrest and activation of DNA repair in response to the presence of DNA damage or unreplicated DNA. May also negatively regulate cell cycle progression during unperturbed cell cycles. Controls phosphorylation and abundance of PDS1 to prevent anaphase entry. Also helps prevent mitotic exit. The polypeptide is Serine/threonine-protein kinase CHK1 (CHK1) (Saccharomyces cerevisiae (strain ATCC 204508 / S288c) (Baker's yeast)).